Reading from the N-terminus, the 191-residue chain is uncharacterized protein (191 aa).

Disordered regions lie at residues 1–42 (MSEE…DADA) and 145–191 (QNQE…IDLD). Composition is skewed to basic and acidic residues over residues 11-26 (PRPD…RATG) and 147-178 (QERR…RDEG).

As to quaternary structure, it may form a heterotetramer of two glucokinase subunits (glk) with two ORF2 proteins.

Its function is as follows. May be involved in glucose transport or metabolism. This is an uncharacterized protein from Streptomyces coelicolor (strain ATCC BAA-471 / A3(2) / M145).